The chain runs to 400 residues: Ubiquitin-like modifier-activating enzyme 5 (400 aa).

ATP-binding residues include Gly76, Asp97, Lys120, Asn143, and Asn177. Cys219 and Cys222 together coordinate Zn(2+). The Glycyl thioester intermediate role is filled by Cys243. Zn(2+)-binding residues include Cys296 and Cys301.

This sequence belongs to the ubiquitin-activating E1 family. UBA5 subfamily.

Functionally, E1-like enzyme which activates UFM1. In Drosophila virilis (Fruit fly), this protein is Ubiquitin-like modifier-activating enzyme 5.